We begin with the raw amino-acid sequence, 1579 residues long: Pentafunctional AROM polypeptide (1579 aa).

The segment at 1–391 (MKVELSKVPI…YGTSAHVVSD (391 aa)) is 3-dehydroquinate synthase. NAD(+)-binding positions include 44-46 (DTN), 79-82 (EAHK), 110-112 (GGV), and aspartate 115. Arginine 126 contributes to the 7-phospho-2-dehydro-3-deoxy-D-arabino-heptonate binding site. An NAD(+)-binding site is contributed by 135 to 136 (TS). The 7-phospho-2-dehydro-3-deoxy-D-arabino-heptonate site is built by aspartate 142 and lysine 148. Residue lysine 157 participates in NAD(+) binding. Asparagine 158 contributes to the 7-phospho-2-dehydro-3-deoxy-D-arabino-heptonate binding site. Residues 175–178 (WLET) and asparagine 186 contribute to the NAD(+) site. Glutamate 190 contributes to the Zn(2+) binding site. Residues 190 to 193 (EVIK) and lysine 257 each bind 7-phospho-2-dehydro-3-deoxy-D-arabino-heptonate. The Proton acceptor; for 3-dehydroquinate synthase activity role is filled by glutamate 267. Residues 271 to 275 (RNLLN) and histidine 278 contribute to the 7-phospho-2-dehydro-3-deoxy-D-arabino-heptonate site. A Zn(2+)-binding site is contributed by histidine 278. Histidine 282 serves as the catalytic Proton acceptor; for 3-dehydroquinate synthase activity. 7-phospho-2-dehydro-3-deoxy-D-arabino-heptonate is bound by residues histidine 294 and lysine 363. Histidine 294 is a Zn(2+) binding site. Residues 404 to 862 (VYPFKTLENG…WDVLHTQLGA (459 aa)) are EPSP synthase. Cysteine 844 (for EPSP synthase activity) is an active-site residue. The interval 881-1070 (SIVIIGMRAA…IPTNRSSFVC (190 aa)) is shikimate kinase. 886–893 (GMRAAGKT) provides a ligand contact to ATP. The segment at 1071-1283 (LTFDDLAAHK…SAPGQLTLSQ (213 aa)) is 3-dehydroquinase. The active-site Proton acceptor; for 3-dehydroquinate dehydratase activity is histidine 1188. Lysine 1217 serves as the catalytic Schiff-base intermediate with substrate; for 3-dehydroquinate dehydratase activity. The shikimate dehydrogenase stretch occupies residues 1296–1579 (AKNFYVVGSP…IYSAVTEEQA (284 aa)).

The protein in the N-terminal section; belongs to the sugar phosphate cyclases superfamily. Dehydroquinate synthase family. This sequence in the 2nd section; belongs to the EPSP synthase family. In the 3rd section; belongs to the shikimate kinase family. It in the 4th section; belongs to the type-I 3-dehydroquinase family. The protein in the C-terminal section; belongs to the shikimate dehydrogenase family. In terms of assembly, homodimer. The cofactor is Zn(2+).

It localises to the cytoplasm. The catalysed reaction is 7-phospho-2-dehydro-3-deoxy-D-arabino-heptonate = 3-dehydroquinate + phosphate. The enzyme catalyses 3-dehydroquinate = 3-dehydroshikimate + H2O. It catalyses the reaction shikimate + NADP(+) = 3-dehydroshikimate + NADPH + H(+). It carries out the reaction shikimate + ATP = 3-phosphoshikimate + ADP + H(+). The catalysed reaction is 3-phosphoshikimate + phosphoenolpyruvate = 5-O-(1-carboxyvinyl)-3-phosphoshikimate + phosphate. It functions in the pathway metabolic intermediate biosynthesis; chorismate biosynthesis; chorismate from D-erythrose 4-phosphate and phosphoenolpyruvate: step 2/7. The protein operates within metabolic intermediate biosynthesis; chorismate biosynthesis; chorismate from D-erythrose 4-phosphate and phosphoenolpyruvate: step 3/7. Its pathway is metabolic intermediate biosynthesis; chorismate biosynthesis; chorismate from D-erythrose 4-phosphate and phosphoenolpyruvate: step 4/7. It participates in metabolic intermediate biosynthesis; chorismate biosynthesis; chorismate from D-erythrose 4-phosphate and phosphoenolpyruvate: step 5/7. It functions in the pathway metabolic intermediate biosynthesis; chorismate biosynthesis; chorismate from D-erythrose 4-phosphate and phosphoenolpyruvate: step 6/7. Functionally, the AROM polypeptide catalyzes 5 consecutive enzymatic reactions in prechorismate polyaromatic amino acid biosynthesis. This Lachancea thermotolerans (strain ATCC 56472 / CBS 6340 / NRRL Y-8284) (Yeast) protein is Pentafunctional AROM polypeptide.